Consider the following 791-residue polypeptide: Putative DNA (cytosine-5)-methyltransferase CMT1 (791 aa).

Positions 37–59 (YQSKKTKLQAPTKKPANKGGKKE) are disordered. A BAH domain is found at 79–199 (VLINLNDDVY…VPYLNFTSAD (121 aa)). The 544-residue stretch at 225–768 (KFLLDLYSGC…YAFGMASQGL (544 aa)) folds into the SAM-dependent MTase C5-type domain. The stretch at 308-333 (VESISELEDEEVEENDDIDEASTGAE) forms a coiled coil. A Chromo domain is found at 339–404 (FEVEKFLGIM…DGFKSHLLPL (66 aa)). Residue C417 is part of the active site.

Belongs to the class I-like SAM-binding methyltransferase superfamily. C5-methyltransferase family. In terms of tissue distribution, expressed in flowers. Not detected in leaves, roots, seedlings and plants prior formation of flower buds.

Its subcellular location is the nucleus. The catalysed reaction is a 2'-deoxycytidine in DNA + S-adenosyl-L-methionine = a 5-methyl-2'-deoxycytidine in DNA + S-adenosyl-L-homocysteine + H(+). Functionally, may be involved in the CpXpG methylation and in gene silencing. The protein is Putative DNA (cytosine-5)-methyltransferase CMT1 (CMT1) of Arabidopsis thaliana (Mouse-ear cress).